A 62-amino-acid polypeptide reads, in one-letter code: MKVIALFFLFAFIFCTLEVAIVEAGFGCPLNQGACHRHCLSIRRRGGYCSGFFKQTCTCYRN.

The signal sequence occupies residues 1-24 (MKVIALFFLFAFIFCTLEVAIVEA). 3 cysteine pairs are disulfide-bonded: C28/C49, C35/C57, and C39/C59.

It belongs to the invertebrate defensin family. Type 2 subfamily. As to expression, highly expressed in non-venom gland (hemolymph) and moderately expressed in venom gland.

The protein localises to the secreted. In terms of biological role, antibacterial peptide active against Gram-positive bacteria (including S.aureus ATCC25923 (MIC=2.5 uM), M.luteus AB93113 (MIC=2.5 uM), and the antibiotic-resistant S.epidermidis PRSE P1389 (MIC=1.25 uM)), but not against Gram-negative bacteria (including E.coli and P.aeruginosa). Also has weak blocking activity on Kv1.1/KCNA1 (8.7% inhibition), Kv1.2/KCNA2 (10.2% inhibition), Kv1.3/KCNA3 (9.0% inhibition), KCa3.1/KCNN4/IK (9.1% inhibition), KCa2.3/KCNN3/SK3 (46.3% inhibition) and Kv11.1/KCNH2/ERG1 (16.9% inhibition) channels (tested at 1 uM). It inhibits potassium channel current by interacting with the pore region. The protein is Defensin BmKDfsin5 of Olivierus martensii (Manchurian scorpion).